A 145-amino-acid polypeptide reads, in one-letter code: RxLR effector protein BLR40 (145 aa).

A signal peptide spans 1 to 22 (MLLSRAISVVALLACICCGVHT). Residues 44-58 (RRLRTSVDLVDNEER) carry the RxLR-dEER motif.

This sequence belongs to the RxLR effector family.

It is found in the secreted. It localises to the host cell membrane. Its function is as follows. Secreted effector that triggers a robust hypersensitive response (HR) in Lactuca sativa cv. Design that is resistant to multiple B.lactucae races, including Bl:24. The polypeptide is RxLR effector protein BLR40 (Bremia lactucae (Lettuce downy mildew)).